The following is a 195-amino-acid chain: Imidazoleglycerol-phosphate dehydratase (195 aa).

It belongs to the imidazoleglycerol-phosphate dehydratase family.

Its subcellular location is the cytoplasm. The enzyme catalyses D-erythro-1-(imidazol-4-yl)glycerol 3-phosphate = 3-(imidazol-4-yl)-2-oxopropyl phosphate + H2O. It functions in the pathway amino-acid biosynthesis; L-histidine biosynthesis; L-histidine from 5-phospho-alpha-D-ribose 1-diphosphate: step 6/9. This is Imidazoleglycerol-phosphate dehydratase from Dinoroseobacter shibae (strain DSM 16493 / NCIMB 14021 / DFL 12).